Reading from the N-terminus, the 312-residue chain is Pectin lyase (312 aa).

R201 is an active-site residue. Residues 254–274 (GSGTFTDTNSVPPITNQKSPK) are disordered. Residues 256–274 (GTFTDTNSVPPITNQKSPK) show a composition bias toward polar residues.

This sequence belongs to the polysaccharide lyase 1 family.

It carries out the reaction Eliminative cleavage of (1-&gt;4)-alpha-D-galacturonan methyl ester to give oligosaccharides with 4-deoxy-6-O-methyl-alpha-D-galact-4-enuronosyl groups at their non-reducing ends.. In Pseudomonas marginalis (Pseudomonas panacis), this protein is Pectin lyase (pnl).